Consider the following 199-residue polypeptide: ATP-dependent Clp protease proteolytic subunit (199 aa).

Residue Ser98 is the Nucleophile of the active site. Residue His123 is part of the active site.

It belongs to the peptidase S14 family. As to quaternary structure, fourteen ClpP subunits assemble into 2 heptameric rings which stack back to back to give a disk-like structure with a central cavity, resembling the structure of eukaryotic proteasomes.

Its subcellular location is the cytoplasm. It carries out the reaction Hydrolysis of proteins to small peptides in the presence of ATP and magnesium. alpha-casein is the usual test substrate. In the absence of ATP, only oligopeptides shorter than five residues are hydrolyzed (such as succinyl-Leu-Tyr-|-NHMec, and Leu-Tyr-Leu-|-Tyr-Trp, in which cleavage of the -Tyr-|-Leu- and -Tyr-|-Trp bonds also occurs).. Its function is as follows. Cleaves peptides in various proteins in a process that requires ATP hydrolysis. Has a chymotrypsin-like activity. Plays a major role in the degradation of misfolded proteins. In Clostridium botulinum (strain Eklund 17B / Type B), this protein is ATP-dependent Clp protease proteolytic subunit.